Here is a 596-residue protein sequence, read N- to C-terminus: Malto-oligosyltrehalose trehalohydrolase (596 aa).

263–268 (RLDAVH) contributes to the substrate binding site. The active-site Nucleophile is Asp-265. The active-site Proton donor is the Glu-302. Residues 327–331 (DDFHH) and 397–402 (HDQIGN) contribute to the substrate site.

Belongs to the glycosyl hydrolase 13 family.

It is found in the cytoplasm. The catalysed reaction is hydrolysis of (1-&gt;4)-alpha-D-glucosidic linkage in 4-alpha-D-[(1-&gt;4)-alpha-D-glucanosyl]n trehalose to yield trehalose and (1-&gt;4)-alpha-D-glucan.. It functions in the pathway glycan biosynthesis; trehalose biosynthesis. The polypeptide is Malto-oligosyltrehalose trehalohydrolase (treZ) (Rhizobium sp. (strain M-11)).